The primary structure comprises 682 residues: Tail-specific protease (682 aa).

Residues 1–22 (MNTFFRLTALAGLLALAGQSFA) form the signal peptide. The region spanning 238-322 (NTEMSLSLEG…SKVRLEILPA (85 aa)) is the PDZ domain. Active-site charge relay system residues include S452, D463, and K477.

It belongs to the peptidase S41A family.

The protein resides in the cell inner membrane. The enzyme catalyses The enzyme shows specific recognition of a C-terminal tripeptide, Xaa-Yaa-Zaa, in which Xaa is preferably Ala or Leu, Yaa is preferably Ala or Tyr, and Zaa is preferably Ala, but then cleaves at a variable distance from the C-terminus. A typical cleavage is -Ala-Ala-|-Arg-Ala-Ala-Lys-Glu-Asn-Tyr-Ala-Leu-Ala-Ala.. In terms of biological role, involved in the cleavage of a C-terminal peptide of 11 residues from the precursor form of penicillin-binding protein 3 (PBP3). May be involved in protection of the bacterium from thermal and osmotic stresses. This Salmonella typhimurium (strain LT2 / SGSC1412 / ATCC 700720) protein is Tail-specific protease (prc).